Here is a 368-residue protein sequence, read N- to C-terminus: Core-capsid bridging protein (368 aa).

2 disordered regions span residues 17–49 (EIYG…DELD) and 307–340 (GYRG…QPVL). The span at 22–31 (PKKEEQDYKP) shows a compositional bias: basic and acidic residues. Composition is skewed to basic residues over residues 32 to 41 (RKLKRVKKKK) and 314 to 337 (RPRR…RRRQ).

This sequence belongs to the adenoviridae core-capsid bridging protein family. In terms of assembly, monomer. Homodimer. Exists in equilibrium between monomers and dimers in solution. Interacts with the histone-like nucleoprotein; this interactions bridge the virus core to the capsid. Interacts with core protein X; this interactions bridge the virus core to the capsid. Interacts with the endosome lysis protein VI; this interactions bridge the virus core to the capsid. Interacts with the peripentonal hexons. Interacts with host NPM1; this interaction might play a role in virus assembly. In terms of processing, during virion entry, is ubiquitinated at the nuclear pore complex by host MIB1. This dissociates viral genomic DNA from capsid and allows genome delivery into nucleus for infection.

Its subcellular location is the virion. The protein localises to the host nucleus. It is found in the host nucleolus. Its function is as follows. Associates loosely with the viral DNA to form an outer shell around the nucleoprotein-DNA complex and links it with the capsid by binding the endosome lysis protein. During entry, secures the viral genome in the capsid until it reaches the nuclear pore complex, preventing innate immunity responses. Dissociates from the viral genome at nuclear pore. Might be involved in nuclear capsid assembly of the viral particles through its association with NPM1/nucleophosmin. The polypeptide is Core-capsid bridging protein (Human adenovirus C serotype 5 (HAdV-5)).